Consider the following 128-residue polypeptide: Insoluble matrix shell protein 3 (128 aa).

A signal peptide spans 1–19 (MLMLLCIIATVIPFSLVEG).

In terms of tissue distribution, component of the acid-insoluble organic matrix of the calcified shell.

Its subcellular location is the secreted. The chain is Insoluble matrix shell protein 3 from Ruditapes philippinarum (Japanese carpet shell).